The primary structure comprises 412 residues: MENVKKTDPTIFSWIEEEWKRQEEGIELIASENFASRAVMEAQGSVLTNKYAEGYPGRRYYGGCQFVDKVEELAISRVKELFNADHANVQPHSGASANMGVYLAALKPGDTVLGMSLDHGGHLTHGSPVNISGKYFNFHHYGILEDTGKIDFDKVRELAKEHKPKMIVAGASAYPRIIDFATFREIADEVGAYLMVDMAHIAGLVAAGLHPNPVPYADFVTTTTHKTLRGPRGGVVLCKEEYKKEIDKAMFPGLQGGPLMHVIASKAVSFQEALSSEFKNYQKQVIKNASVLADELNNLGYDLVAGGSDNHLMLVDLQKKGVTGKKAERVLDDVHITVNKNAVPNDPEGPFVTSGLRLGTPAVTTRGFAEDEIKEVAQLLDKVITGLEDQENLEKCKKQVTDLCHRFPLYRQ.

(6S)-5,6,7,8-tetrahydrofolate-binding positions include Leu117 and 121 to 123; that span reads GHL. At Lys226 the chain carries N6-(pyridoxal phosphate)lysine.

This sequence belongs to the SHMT family. As to quaternary structure, homodimer. Pyridoxal 5'-phosphate is required as a cofactor.

The protein resides in the cytoplasm. It catalyses the reaction (6R)-5,10-methylene-5,6,7,8-tetrahydrofolate + glycine + H2O = (6S)-5,6,7,8-tetrahydrofolate + L-serine. It functions in the pathway one-carbon metabolism; tetrahydrofolate interconversion. It participates in amino-acid biosynthesis; glycine biosynthesis; glycine from L-serine: step 1/1. Its function is as follows. Catalyzes the reversible interconversion of serine and glycine with tetrahydrofolate (THF) serving as the one-carbon carrier. This reaction serves as the major source of one-carbon groups required for the biosynthesis of purines, thymidylate, methionine, and other important biomolecules. Also exhibits THF-independent aldolase activity toward beta-hydroxyamino acids, producing glycine and aldehydes, via a retro-aldol mechanism. This chain is Serine hydroxymethyltransferase, found in Natranaerobius thermophilus (strain ATCC BAA-1301 / DSM 18059 / JW/NM-WN-LF).